A 295-amino-acid chain; its full sequence is Cytidine deaminase (295 aa).

CMP/dCMP-type deaminase domains lie at Glu-48–Ala-168 and Asp-187–Leu-295. Asn-89–Glu-91 is a binding site for substrate. His-102 provides a ligand contact to Zn(2+). Glu-104 serves as the catalytic Proton donor. 2 residues coordinate Zn(2+): Cys-129 and Cys-132.

This sequence belongs to the cytidine and deoxycytidylate deaminase family. As to quaternary structure, homodimer. Requires Zn(2+) as cofactor.

It carries out the reaction cytidine + H2O + H(+) = uridine + NH4(+). It catalyses the reaction 2'-deoxycytidine + H2O + H(+) = 2'-deoxyuridine + NH4(+). This enzyme scavenges exogenous and endogenous cytidine and 2'-deoxycytidine for UMP synthesis. The protein is Cytidine deaminase of Vibrio cholerae serotype O1 (strain ATCC 39541 / Classical Ogawa 395 / O395).